An 859-amino-acid chain; its full sequence is Autoinducer 2 sensor kinase/phosphatase LuxQ (859 aa).

The next 2 membrane-spanning stretches (helical) occupy residues 15–35 (ATLI…GIFI) and 280–300 (IQHI…ALMS). In terms of domain architecture, Histidine kinase spans 489–711 (KMSHEIRTPI…TFVITLPVKD (223 aa)). His492 bears the Phosphohistidine; by autocatalysis mark. The 116-residue stretch at 736–851 (KVLLVEDNHT…ALHEAFVDFK (116 aa)) folds into the Response regulatory domain. 4-aspartylphosphate is present on Asp785.

As to quaternary structure, binds the complex formed by AI-2 and LuxP.

It localises to the cell inner membrane. It catalyses the reaction ATP + protein L-histidine = ADP + protein N-phospho-L-histidine.. In terms of biological role, at low cell density, in absence of AI-2 (autoinducer 2), LuxQ has a kinase activity and autophosphorylates on a histidine residue. The phosphoryl group is then transferred to an aspartate residue in the response regulator domain. The phosphoryl group is transferred to LuxU, and ultimately to LuxO. At high cell density, in the presence of AI-2, the kinase activity is inactivated, and the response regulator domain has a phosphatase activity. The sequence is that of Autoinducer 2 sensor kinase/phosphatase LuxQ (luxQ) from Vibrio harveyi (Beneckea harveyi).